We begin with the raw amino-acid sequence, 186 residues long: Ribosome-recycling factor (186 aa).

Belongs to the RRF family.

Its subcellular location is the cytoplasm. Responsible for the release of ribosomes from messenger RNA at the termination of protein biosynthesis. May increase the efficiency of translation by recycling ribosomes from one round of translation to another. The sequence is that of Ribosome-recycling factor from Nitratiruptor sp. (strain SB155-2).